The chain runs to 444 residues: ATP-dependent protease ATPase subunit HslU (444 aa).

ATP is bound by residues Ile-18, 60–65, Asp-257, Glu-322, and Arg-394; that span reads GVGKTE.

The protein belongs to the ClpX chaperone family. HslU subfamily. In terms of assembly, a double ring-shaped homohexamer of HslV is capped on each side by a ring-shaped HslU homohexamer. The assembly of the HslU/HslV complex is dependent on binding of ATP.

Its subcellular location is the cytoplasm. In terms of biological role, ATPase subunit of a proteasome-like degradation complex; this subunit has chaperone activity. The binding of ATP and its subsequent hydrolysis by HslU are essential for unfolding of protein substrates subsequently hydrolyzed by HslV. HslU recognizes the N-terminal part of its protein substrates and unfolds these before they are guided to HslV for hydrolysis. This is ATP-dependent protease ATPase subunit HslU from Psychromonas ingrahamii (strain DSM 17664 / CCUG 51855 / 37).